The following is a 124-amino-acid chain: Small ribosomal subunit protein bS16 (124 aa).

A compositionally biased stretch (basic residues) spans 81–90 (LKKRPARNNP). A disordered region spans residues 81–124 (LKKRPARNNPHKGEPGKKAQERIAAAKQAAEDAAAAAEADSASE). Over residues 91–101 (HKGEPGKKAQE) the composition is skewed to basic and acidic residues. Positions 102–124 (RIAAAKQAAEDAAAAAEADSASE) are enriched in low complexity.

Belongs to the bacterial ribosomal protein bS16 family.

The sequence is that of Small ribosomal subunit protein bS16 from Bartonella tribocorum (strain CIP 105476 / IBS 506).